Consider the following 449-residue polypeptide: tRNA-2-methylthio-N(6)-dimethylallyladenosine synthase (449 aa).

The MTTase N-terminal domain occupies 3-118 (KKVFVKTFGC…LPELLAQREA (116 aa)). The [4Fe-4S] cluster site is built by C12, C49, C81, C155, C159, and C162. The region spanning 141–376 (RVEGASAFVS…VINANIKSIS (236 aa)) is the Radical SAM core domain. The region spanning 377–440 (ESRVGTVQRI…AYTLRGEVVT (64 aa)) is the TRAM domain.

This sequence belongs to the methylthiotransferase family. MiaB subfamily. As to quaternary structure, monomer. [4Fe-4S] cluster serves as cofactor.

It is found in the cytoplasm. The catalysed reaction is N(6)-dimethylallyladenosine(37) in tRNA + (sulfur carrier)-SH + AH2 + 2 S-adenosyl-L-methionine = 2-methylsulfanyl-N(6)-dimethylallyladenosine(37) in tRNA + (sulfur carrier)-H + 5'-deoxyadenosine + L-methionine + A + S-adenosyl-L-homocysteine + 2 H(+). Functionally, catalyzes the methylthiolation of N6-(dimethylallyl)adenosine (i(6)A), leading to the formation of 2-methylthio-N6-(dimethylallyl)adenosine (ms(2)i(6)A) at position 37 in tRNAs that read codons beginning with uridine. This Paracidovorax citrulli (strain AAC00-1) (Acidovorax citrulli) protein is tRNA-2-methylthio-N(6)-dimethylallyladenosine synthase.